Reading from the N-terminus, the 344-residue chain is Lysophosphatidic acid receptor 6 (344 aa).

Topologically, residues 1–25 are extracellular; sequence MVSSNGSQCPYDDSFKYTLYGCMFS. The N-linked (GlcNAc...) asparagine glycan is linked to asparagine 5. The helical transmembrane segment at 26 to 46 threads the bilayer; that stretch reads MVFVLGLISNCVAIYIFICAL. At 47–56 the chain is on the cytoplasmic side; sequence KVRNETTTYM. A helical transmembrane segment spans residues 57–77; it reads INLAMSDLLFVFTLPFRIFYF. Over 78–90 the chain is Extracellular; that stretch reads ATRNWPFGDLLCK. An intrachain disulfide couples cysteine 89 to cysteine 168. Residues 91 to 111 form a helical membrane-spanning segment; sequence ISVMLFYTNMYGSILFLTCIS. The Cytoplasmic portion of the chain corresponds to 112–134; it reads VDRFLAIVYPFKSKTLRTKRNAK. A helical membrane pass occupies residues 135–155; the sequence is IVCIAVWFTVMGGSAPAVFFQ. Residues 156 to 183 are Extracellular-facing; it reads STHSQGNNTSEACFENFPAATWKTYLSR. N-linked (GlcNAc...) asparagine glycosylation is found at asparagine 162 and asparagine 163. Residues 184-204 traverse the membrane as a helical segment; sequence IVIFIEIVGFFIPLILNVTCS. The Cytoplasmic portion of the chain corresponds to 205 to 230; that stretch reads SMVLRTLNKPVTLSRSKMNKTKVLKM. A helical transmembrane segment spans residues 231-251; the sequence is IFVHLVIFCFCFVPYNINLIL. Topologically, residues 252 to 272 are extracellular; it reads YSLMRTQTFVNCSVVAAVRTM. N-linked (GlcNAc...) asparagine glycosylation is present at asparagine 262. Residues 273 to 293 traverse the membrane as a helical segment; sequence YPITLCIAVSNCCFDPIVYYF. Cysteine 284 carries the S-palmitoyl cysteine lipid modification. Residues 294 to 344 are Cytoplasmic-facing; that stretch reads TSDTIQNSIKMKNWSVRRSDSRFSEVQGTENFIQHNLQTLKNKIFDNESAI.

Belongs to the G-protein coupled receptor 1 family. Ubiquitously expressed. Detected in the hair follicles and skin (at protein level).

Its subcellular location is the cell membrane. Its function is as follows. Binds to oleoyl-L-alpha-lysophosphatidic acid (LPA). Intracellular cAMP is involved in the receptor activation. Important for the maintenance of hair growth and texture. This chain is Lysophosphatidic acid receptor 6 (Lpar6), found in Mus musculus (Mouse).